Here is a 57-residue protein sequence, read N- to C-terminus: Lantibiotic nisin-Z (57 aa).

Residues 1 to 23 (MSTKDFNLDLVSVSKKDSGASPR) constitute a propeptide that is removed on maturation. Residue Thr-25 is modified to 2,3-didehydrobutyrine. A cross-link (lanthionine (Ser-Cys)) is located at residues 26 to 30 (SISLC). The residue at position 28 (Ser-28) is a 2,3-didehydroalanine (Ser). Cross-links (beta-methyllanthionine (Thr-Cys)) lie at residues 31 to 34 (TPGC), 36 to 42 (TGALMGC), 46 to 49 (TATC), and 48 to 51 (TCNC). Residue Ser-56 is modified to 2,3-didehydroalanine (Ser).

It belongs to the type A lantibiotic family. Maturation of lantibiotics involves the enzymatic conversion of Thr, and Ser into dehydrated AA and the formation of thioether bonds with cysteine. This is followed by membrane translocation and cleavage of the modified precursor. Post-translationally, the structure of the 2,3-didehydrobutyrine is not discussed in PubMed:15361862. It is probably the Z-isomer by similarity.

Its function is as follows. Lanthionine-containing peptide antibiotic (lantibiotic) active on Gram-positive bacteria. The bactericidal activity of lantibiotics is based on depolarization of energized bacterial cytoplasmic membranes, initiated by the formation of aqueous transmembrane pores. The polypeptide is Lantibiotic nisin-Z (nisZ) (Lactococcus lactis subsp. lactis (Streptococcus lactis)).